The primary structure comprises 95 residues: Protein TusB (95 aa).

Belongs to the DsrH/TusB family. Heterohexamer, formed by a dimer of trimers. The hexameric TusBCD complex contains 2 copies each of TusB, TusC and TusD. The TusBCD complex interacts with TusE.

Its subcellular location is the cytoplasm. In terms of biological role, part of a sulfur-relay system required for 2-thiolation of 5-methylaminomethyl-2-thiouridine (mnm(5)s(2)U) at tRNA wobble positions. The polypeptide is Protein TusB (Escherichia coli O157:H7).